A 286-amino-acid chain; its full sequence is 2-hydroxy-6-oxo-6-phenylhexa-2,4-dienoate hydrolase (286 aa).

The AB hydrolase-1 domain maps to 36–271 (VIMLHGGGPG…RCGHWAQWEH (236 aa)). Residues 42 to 43 (GG), Asn-51, Asn-111, Ser-180, and Arg-190 each bind substrate. The active-site Proton acceptor is His-265. Trp-266 lines the substrate pocket.

The protein belongs to the AB hydrolase superfamily. BphD family. In terms of assembly, homodimer.

It catalyses the reaction 2,6-dioxo-6-phenylhexa-3-enoate + H2O = 2-oxopent-4-enoate + benzoate + H(+). The protein operates within xenobiotic degradation; biphenyl degradation; 2-hydroxy-2,4-pentadienoate and benzoate from biphenyl: step 4/4. Functionally, catalyzes an unusual C-C bond hydrolysis of 2-hydroxy-6-oxo-6-phenylhexa-2,4-dienoic acid (HOPDA) to produce benzoic acid and 2-hydroxy-2,4-pentadienoic acid (HPD). The protein is 2-hydroxy-6-oxo-6-phenylhexa-2,4-dienoate hydrolase of Burkholderia cepacia (Pseudomonas cepacia).